The chain runs to 241 residues: Small ribosomal subunit protein uS2c (241 aa).

It belongs to the universal ribosomal protein uS2 family.

The protein resides in the plastid. It localises to the chloroplast. The sequence is that of Small ribosomal subunit protein uS2c (rps2) from Porphyra purpurea (Red seaweed).